We begin with the raw amino-acid sequence, 370 residues long: Keratin-associated protein 10-7 (370 aa).

The tract at residues 36 to 363 (DCPESCCEPP…CSRPACCGPT (328 aa)) is 30 X 5 AA repeats of C-C-X(3). 30 consecutive repeat copies span residues 41–45 (CCEPP), 46–50 (CCAPA), 67–71 (CCRVT), 89–93 (CCQQS), 99–103 (CCASS), 109–113 (CCVPV), 114–118 (CCKTV), 119–123 (CCKPV), 135–139 (CCQQS), 145–149 (CCTSS), 155–159 (CCVPI), 160–164 (CCKPV), 172–176 (CCQQS), 186–190 (CCQAV), 208–212 (CCQQS), 218–222 (CCTSS), 228–232 (CCVPV), 233–237 (CCKPV), 238–242 (CCVPT), 250–254 (CCQPA), 255–259 (CCTSS), 265–269 (CCVPV), 270–274 (CCKPV), 275–279 (CCVPV), 287–291 (CCQQS), 297–301 (CCTTS), 302–306 (CCRPS), 321–325 (CCVPV), 339–343 (CCRPA), and 359–363 (CCGPT).

The protein belongs to the KRTAP type 10 family. As to quaternary structure, interacts with hair keratins. Restricted to a narrow region of the hair fiber cuticle, lying approximately 20 cell layers above the apex of the dermal papilla of the hair root; not detected in any other tissues.

Functionally, in the hair cortex, hair keratin intermediate filaments are embedded in an interfilamentous matrix, consisting of hair keratin-associated proteins (KRTAP), which are essential for the formation of a rigid and resistant hair shaft through their extensive disulfide bond cross-linking with abundant cysteine residues of hair keratins. The matrix proteins include the high-sulfur and high-glycine-tyrosine keratins. The sequence is that of Keratin-associated protein 10-7 (KRTAP10-7) from Homo sapiens (Human).